The chain runs to 938 residues: Breast cancer type 2 susceptibility protein homolog (938 aa).

2 stretches are compositionally biased toward basic and acidic residues: residues Leu320–Ile339 and Asn409–Asn425. Disordered regions lie at residues Leu320 to Leu359 and Asn409 to Gln434. BRCA2 repeat units follow at residues Ala537–Tyr571, Asn638–Ala672, and Ser713–Ala747. A compositionally biased stretch (polar residues) spans Ser870–Ala879. Residues Ser870–Tyr938 are disordered. The span at Ala898–Ala915 shows a compositional bias: basic and acidic residues. Positions Lys926 to Tyr938 are enriched in basic residues.

In terms of assembly, interacts with Rad9 and spn-A/Rad51.

It is found in the nucleus. Involved in and required for double-strand break repair by meiotic and mitotic homologous recombination. During meiosis, has a dual role in the repair of meiotic double-stranded breaks and the efficient activation of the meiotic recombination checkpoint. This chain is Breast cancer type 2 susceptibility protein homolog, found in Drosophila sechellia (Fruit fly).